We begin with the raw amino-acid sequence, 560 residues long: Phenol regulator MopR (560 aa).

Phenol-binding residues include H106 and W134. C155, E178, C181, and C189 together coordinate Zn(2+). The Sigma-54 factor interaction domain maps to 245 to 474; the sequence is AVGESVAYRK…LENLLERATL (230 aa). ATP-binding positions include 273–280 and 336–345; these read GETGVGKE and AHGGTIFLDE.

Homodimer.

Activity is triggered by phenol binding. Its function is as follows. Involved in the regulation of the phenol degradation pathway. Activates phenol hydroxylase expression in the presence of phenol. The protein is Phenol regulator MopR of Acinetobacter guillouiae (Acinetobacter genomosp. 11).